The sequence spans 467 residues: MKTLKQAESYIKSKVNTGTDFDGLYGYQCMDLAVDYIYHVTDGKIRMWGNAKDAINNSFGGTATVYKNYPAFRPKYGDVVVWTTGNFATYGHIAIVTNPDPYGDLQYVTVLEQNWNGNGIYKTELATIRTHDYTGITHFIRPNFATESSVKKKDTKKKPKPSNRDGINKDKIVYDRTNINYNMVKRGYNPVGVILHNDAGSMTGLQYKNNLQNAGYNRWAQGIAHSYISEGQVWQALGESRIAWHCANQWGNKNLYGIEICQSMTASDEQFLKNEQTAFYEASRMLKKWGLKPDKNTVRLHMEYYQTACPHRSMKLHVGKDPTKTSITQADIEKLKEYFIKQIKMYYEGKTPVPTVVNQKAKTKPVKQSSTSGWNVNNYGTYYKSESATFKCTARQGIVTRYTGPFTTCPQAGVLYYGQSVTYDTVCKQDGYVWISWTTNGGQDVWMPVRTWDKNTDIMGQLWGDIY.

The region spanning Leu4–Arg141 is the Peptidase C51 domain. Asp20 and Asp22 together coordinate Ca(2+). Cys29 functions as the For endopeptidase activity in the catalytic mechanism. A Ca(2+)-binding site is contributed by Asp31. Residues His92 and Glu112 each act as for endopeptidase activity in the active site. Residues Ser148–Lys169 are disordered. An N-acetylmuramoyl-L-alanine amidase domain is found at Asn189–His311. 3 residues coordinate Zn(2+): His196, His301, and Cys309. Residues Ser385–Asn455 form the SH3b domain.

It belongs to the N-acetylmuramoyl-L-alanine amidase 2 family. The cofactor is Zn(2+).

The catalysed reaction is Hydrolyzes the link between N-acetylmuramoyl residues and L-amino acid residues in certain cell-wall glycopeptides.. In terms of biological role, endolysin that degrades host peptidoglycans and participates in the sequential events which lead to the programmed host cell lysis releasing the mature viral particles. The CHAP activity cleaves the peptidic bond between the D-alanine of the tetra-peptide stem and the first glycine of the penta-glycine cross-bridge. The N-acetyl-muramidase activity cleaves between N-acetylmuramic acid and N-acetylglucosamine bonds. The chain is Endolysin PlyTW (plyTW) from Twortvirus twort (Bacteriophage Twort).